The primary structure comprises 34 residues: VTMGYIKDGDGKKIAKKKNKNGRKHVEIDLNKVG.

Residues 1–34 (VTMGYIKDGDGKKIAKKKNKNGRKHVEIDLNKVG) form a disordered region. A compositionally biased stretch (basic residues) spans 14–23 (IAKKKNKNGR). The segment covering 24–34 (KHVEIDLNKVG) has biased composition (basic and acidic residues).

As to expression, expressed by the venom gland.

The protein resides in the secreted. The polypeptide is Non-cysteinic peptide Bs 10 (Hottentotta tamulus sindicus (Scorpion)).